We begin with the raw amino-acid sequence, 452 residues long: Lamina-associated polypeptide 2, isoforms beta/delta/epsilon/gamma (452 aa).

A nucleoplasmic region spans residues M1 to S409. One can recognise an LEM-like domain in the interval L5 to R48. Disordered regions lie at residues R48–V111 and R149–T263. The segment at N49–D108 is linker. Residues S59, S66, and S67 each carry the phosphoserine modification. At T74 the chain carries Phosphothreonine. 2 positions are modified to phosphoserine: S79 and S82. R85 and R87 each carry omega-N-methylarginine. The segment covering K96–D105 has biased composition (basic and acidic residues). The LEM domain maps to L109–T153. Positions T137–L242 are NAKAP95-binding N. Phosphothreonine is present on T153. The span at E154 to N177 shows a compositional bias: polar residues. 2 positions are modified to phosphoserine: S155 and S158. Phosphothreonine occurs at positions 159 and 163. A phosphoserine mark is found at S165, S167, and S176. Basic and acidic residues predominate over residues D178–K202. A Phosphoserine; by PKC modification is found at S179. A phosphoserine mark is found at S183 and S189. K206 carries the N6-acetyllysine modification. A Phosphothreonine modification is found at T210. Phosphoserine is present on residues S221 and S223. Positions G226–G240 are enriched in low complexity. Residues S249, S253, S264, S291, S305, and S306 each carry the phosphoserine modification. The binds lamins B stretch occupies residues T298–A370. Residues G299–P373 are NAKAP95-binding C. T311 carries the phosphothreonine modification. Position 314 is a phosphoserine (S314). R319 is modified (citrulline). Phosphoserine is present on residues S361, S377, and S384. K388 carries the N6-acetyllysine modification. A Glycyl lysine isopeptide (Lys-Gly) (interchain with G-Cter in SUMO2) cross-link involves residue K400. S401 is modified (phosphoserine). A helical; Signal-anchor for type II membrane protein transmembrane segment spans residues V410–Y430. Topologically, residues Q431–N452 are lumenal.

The protein belongs to the LEM family. Interacts with LMNB1, LMNB2, BANF1, AKAP8L, GMCL and chromosomes. In terms of processing, mitosis-specific phosphorylation specifically abolishes its binding to lamin B and chromosomes. Citrullinated by PADI4.

It localises to the nucleus inner membrane. It is found in the chromosome. May help direct the assembly of the nuclear lamina and thereby help maintain the structural organization of the nuclear envelope. Possible receptor for attachment of lamin filaments to the inner nuclear membrane. May be involved in the control of initiation of DNA replication through its interaction with NAKAP95. This is Lamina-associated polypeptide 2, isoforms beta/delta/epsilon/gamma (Tmpo) from Mus musculus (Mouse).